The sequence spans 329 residues: Biotin synthase (329 aa).

Positions 38 to 262 (NTIQVSTLLS…IMPHSYIRLS (225 aa)) constitute a Radical SAM core domain. Cys53, Cys57, and Cys60 together coordinate [4Fe-4S] cluster. Residues Cys97, Cys128, Cys188, and Arg260 each coordinate [2Fe-2S] cluster.

Belongs to the radical SAM superfamily. Biotin synthase family. In terms of assembly, homodimer. Requires [4Fe-4S] cluster as cofactor. It depends on [2Fe-2S] cluster as a cofactor.

The catalysed reaction is (4R,5S)-dethiobiotin + (sulfur carrier)-SH + 2 reduced [2Fe-2S]-[ferredoxin] + 2 S-adenosyl-L-methionine = (sulfur carrier)-H + biotin + 2 5'-deoxyadenosine + 2 L-methionine + 2 oxidized [2Fe-2S]-[ferredoxin]. The protein operates within cofactor biosynthesis; biotin biosynthesis; biotin from 7,8-diaminononanoate: step 2/2. In terms of biological role, catalyzes the conversion of dethiobiotin (DTB) to biotin by the insertion of a sulfur atom into dethiobiotin via a radical-based mechanism. This is Biotin synthase from Acinetobacter calcoaceticus.